The chain runs to 149 residues: Large-conductance mechanosensitive channel (149 aa).

3 helical membrane passes run 16-36 (VMDLAVGVIIGGAFSTIVNSV), 40-60 (LIMPVVGVATGGLDFSNKFIL), and 89-109 (GSFITVAINFVILALIIFMMV).

Belongs to the MscL family. In terms of assembly, homopentamer.

It is found in the cell inner membrane. Functionally, channel that opens in response to stretch forces in the membrane lipid bilayer. May participate in the regulation of osmotic pressure changes within the cell. The chain is Large-conductance mechanosensitive channel from Paraburkholderia phymatum (strain DSM 17167 / CIP 108236 / LMG 21445 / STM815) (Burkholderia phymatum).